The primary structure comprises 277 residues: 4-hydroxy-3-methylbut-2-enyl diphosphate reductase (277 aa).

Residue Cys12 participates in [4Fe-4S] cluster binding. His36 and His70 together coordinate (2E)-4-hydroxy-3-methylbut-2-enyl diphosphate. His36 and His70 together coordinate dimethylallyl diphosphate. 2 residues coordinate isopentenyl diphosphate: His36 and His70. [4Fe-4S] cluster is bound at residue Cys92. His120 contributes to the (2E)-4-hydroxy-3-methylbut-2-enyl diphosphate binding site. Residue His120 participates in dimethylallyl diphosphate binding. His120 lines the isopentenyl diphosphate pocket. Glu122 acts as the Proton donor in catalysis. Thr158 provides a ligand contact to (2E)-4-hydroxy-3-methylbut-2-enyl diphosphate. Cys186 serves as a coordination point for [4Fe-4S] cluster. Positions 214, 216, and 258 each coordinate (2E)-4-hydroxy-3-methylbut-2-enyl diphosphate. Dimethylallyl diphosphate-binding residues include Ser214, Asn216, and Ser258. Isopentenyl diphosphate is bound by residues Ser214, Asn216, and Ser258.

It belongs to the IspH family. The cofactor is [4Fe-4S] cluster.

The enzyme catalyses isopentenyl diphosphate + 2 oxidized [2Fe-2S]-[ferredoxin] + H2O = (2E)-4-hydroxy-3-methylbut-2-enyl diphosphate + 2 reduced [2Fe-2S]-[ferredoxin] + 2 H(+). The catalysed reaction is dimethylallyl diphosphate + 2 oxidized [2Fe-2S]-[ferredoxin] + H2O = (2E)-4-hydroxy-3-methylbut-2-enyl diphosphate + 2 reduced [2Fe-2S]-[ferredoxin] + 2 H(+). Its pathway is isoprenoid biosynthesis; dimethylallyl diphosphate biosynthesis; dimethylallyl diphosphate from (2E)-4-hydroxy-3-methylbutenyl diphosphate: step 1/1. It functions in the pathway isoprenoid biosynthesis; isopentenyl diphosphate biosynthesis via DXP pathway; isopentenyl diphosphate from 1-deoxy-D-xylulose 5-phosphate: step 6/6. Its function is as follows. Catalyzes the conversion of 1-hydroxy-2-methyl-2-(E)-butenyl 4-diphosphate (HMBPP) into a mixture of isopentenyl diphosphate (IPP) and dimethylallyl diphosphate (DMAPP). Acts in the terminal step of the DOXP/MEP pathway for isoprenoid precursor biosynthesis. The polypeptide is 4-hydroxy-3-methylbut-2-enyl diphosphate reductase (Campylobacter jejuni subsp. doylei (strain ATCC BAA-1458 / RM4099 / 269.97)).